Reading from the N-terminus, the 314-residue chain is Olfactory receptor 11H7 (314 aa).

The Extracellular segment spans residues 1-24 (MNNSQISTVTQFVLLGFPGPWKIQ). N-linked (GlcNAc...) asparagine glycosylation is present at Asn-2. Residues 25–45 (IIFFSMILLVYIFTLTGNMAI) form a helical membrane-spanning segment. Residues 46-57 (ICAVRWDHRLHT) lie on the Cytoplasmic side of the membrane. Residues 58-78 (PMYVLLANFSFLEIWYVTCTV) traverse the membrane as a helical segment. The Extracellular portion of the chain corresponds to 79–97 (PNMLVNFFSKTKTISFSGC). Cysteines 97 and 179 form a disulfide. Residues 98–118 (FTQFHFFFSLGTTECFFLCVM) traverse the membrane as a helical segment. Residues 119 to 142 (AYDRYLAICHPLHYPSIMTGQLCG) are Cytoplasmic-facing. Residues 143–163 (ILVSLCWLIGFLGHSISIFFI) traverse the membrane as a helical segment. The Extracellular portion of the chain corresponds to 164–201 (FQLPFCGPNIIDHFLCDVDPLMALSSAPTHIIGHVFHS). A helical transmembrane segment spans residues 202–222 (VSSLFINLTMVYILGSYTLVL). Topologically, residues 223 to 244 (RTVLQVPSSAGWQKAISTCGSH) are cytoplasmic. The chain crosses the membrane as a helical span at residues 245-265 (LVVVSLFYGAIMLMYVSPTPG). The Extracellular portion of the chain corresponds to 266-271 (NSVAMH). A helical transmembrane segment spans residues 272–292 (KLITLIYSVVTPVLNPLIYSL). Over 293-314 (RNKDMKYALHHVFCGMRIIQRS) the chain is Cytoplasmic.

The protein belongs to the G-protein coupled receptor 1 family.

It is found in the cell membrane. Functionally, odorant receptor. Activated by isovaleric acid. This Homo sapiens (Human) protein is Olfactory receptor 11H7 (OR11H7).